The following is a 78-amino-acid chain: ATP synthase subunit c (78 aa).

2 helical membrane-spanning segments follow: residues 9–29 (AFIG…GQGW) and 56–76 (AAVT…LVFV).

It belongs to the ATPase C chain family. F-type ATPases have 2 components, F(1) - the catalytic core - and F(0) - the membrane proton channel. F(1) has five subunits: alpha(3), beta(3), gamma(1), delta(1), epsilon(1). F(0) has three main subunits: a(1), b(2) and c(10-14). The alpha and beta chains form an alternating ring which encloses part of the gamma chain. F(1) is attached to F(0) by a central stalk formed by the gamma and epsilon chains, while a peripheral stalk is formed by the delta and b chains.

It localises to the cell membrane. F(1)F(0) ATP synthase produces ATP from ADP in the presence of a proton or sodium gradient. F-type ATPases consist of two structural domains, F(1) containing the extramembraneous catalytic core and F(0) containing the membrane proton channel, linked together by a central stalk and a peripheral stalk. During catalysis, ATP synthesis in the catalytic domain of F(1) is coupled via a rotary mechanism of the central stalk subunits to proton translocation. Functionally, key component of the F(0) channel; it plays a direct role in translocation across the membrane. A homomeric c-ring of between 10-14 subunits forms the central stalk rotor element with the F(1) delta and epsilon subunits. The sequence is that of ATP synthase subunit c from Malacoplasma penetrans (strain HF-2) (Mycoplasma penetrans).